The primary structure comprises 89 residues: Bacterial microcompartment shell vertex protein GrpN (89 aa).

Positions 1–83 constitute a BMV domain; it reads MYLGKVIGTV…IDAAVVGIVD (83 aa).

It belongs to the CcmL/EutN family. In terms of assembly, homopentamer with a small central pore.

The protein resides in the bacterial microcompartment. Probably forms vertices in the bacterial microcompartment (BMC) predicted to be involved in glycyl radical-based 1,2-propanediol metabolism in this organism. The polypeptide is Bacterial microcompartment shell vertex protein GrpN (Rhodospirillum rubrum (strain F11)).